The primary structure comprises 160 residues: Serine-protein kinase RsbW (160 aa).

It belongs to the anti-sigma-factor family.

The catalysed reaction is L-seryl-[protein] + ATP = O-phospho-L-seryl-[protein] + ADP + H(+). The enzyme catalyses L-threonyl-[protein] + ATP = O-phospho-L-threonyl-[protein] + ADP + H(+). Its function is as follows. Negative regulator of sigma-B activity. Phosphorylates and inactivates its specific antagonist protein, RsbV. Upon phosphorylation of RsbV, RsbW is released and binds to sigma-B, thereby blocking its ability to form an RNA polymerase holoenzyme (E-sigma-B). The protein is Serine-protein kinase RsbW of Bacillus thuringiensis (strain Al Hakam).